Here is a 387-residue protein sequence, read N- to C-terminus: G2/mitotic-specific cyclin-B2 (387 aa).

It belongs to the cyclin family. Cyclin AB subfamily. In terms of assembly, interacts with the CDK1 protein kinase to form a serine/threonine kinase holoenzyme complex also known as maturation promoting factor (MPF). The cyclin subunit imparts substrate specificity to the complex.

Its function is as follows. Essential for the control of the cell cycle at the G2/M (mitosis) transition. The protein is G2/mitotic-specific cyclin-B2 (ccnb2) of Oryzias latipes (Japanese rice fish).